Reading from the N-terminus, the 345-residue chain is uncharacterized protein (345 aa).

The protein localises to the cell membrane. Involved in potassium and divalent cation transport. Enhances the transport activity of the cation/potassium transporter CzcD. This is an uncharacterized protein from Bacillus velezensis (strain DSM 23117 / BGSC 10A6 / LMG 26770 / FZB42) (Bacillus amyloliquefaciens subsp. plantarum).